A 287-amino-acid chain; its full sequence is Protease HtpX (287 aa).

The next 2 helical transmembrane spans lie at 4 to 24 and 33 to 53; these read IFLL…VMSI and GGLL…SLAI. Residue H139 coordinates Zn(2+). E140 is an active-site residue. H143 contributes to the Zn(2+) binding site. Transmembrane regions (helical) follow at residues 154–174 and 195–215; these read LIQG…AGII and AVVF…VAYF. E220 lines the Zn(2+) pocket.

This sequence belongs to the peptidase M48B family. It depends on Zn(2+) as a cofactor.

The protein localises to the cell inner membrane. This Shewanella sp. (strain ANA-3) protein is Protease HtpX.